Reading from the N-terminus, the 278-residue chain is Probable velvet family sexual development regulator SCHCODRAFT_28806 (278 aa).

Residues 51–255 (GRTIRASLDE…ARVGVRLSVR (205 aa)) enclose the Velvet domain. The tract at residues 257–278 (TGKKATTKRRKRSDSFDEDDSS) is disordered.

The protein belongs to the velvet family.

Its subcellular location is the nucleus. Velvet-domain-containing protein that probably acts as a positive regulator of sexual development. This is Probable velvet family sexual development regulator SCHCODRAFT_28806 from Schizophyllum commune (strain H4-8 / FGSC 9210) (Split gill fungus).